The chain runs to 124 residues: Small ribosomal subunit protein uS12 (124 aa).

D89 carries the 3-methylthioaspartic acid modification. The tract at residues 104–124 is disordered; sequence TAGVKDRRQSRSKYGAKTPKE.

Belongs to the universal ribosomal protein uS12 family. As to quaternary structure, part of the 30S ribosomal subunit. Contacts proteins S8 and S17. May interact with IF1 in the 30S initiation complex.

With S4 and S5 plays an important role in translational accuracy. Its function is as follows. Interacts with and stabilizes bases of the 16S rRNA that are involved in tRNA selection in the A site and with the mRNA backbone. Located at the interface of the 30S and 50S subunits, it traverses the body of the 30S subunit contacting proteins on the other side and probably holding the rRNA structure together. The combined cluster of proteins S8, S12 and S17 appears to hold together the shoulder and platform of the 30S subunit. The chain is Small ribosomal subunit protein uS12 from Parasynechococcus marenigrum (strain WH8102).